Consider the following 387-residue polypeptide: S-adenosylmethionine synthase (387 aa).

Residue His-15 coordinates ATP. Asp-17 contributes to the Mg(2+) binding site. Residue Glu-43 participates in K(+) binding. Residues Glu-56 and Gln-99 each contribute to the L-methionine site. Residues 99–109 are flexible loop; sequence QSPDIALGVNR. ATP is bound by residues 166–168, 232–233, Asp-241, 247–248, Ala-264, and Lys-268; these read DAK, RF, and RK. Asp-241 contributes to the L-methionine binding site. An L-methionine-binding site is contributed by Lys-272.

It belongs to the AdoMet synthase family. Homotetramer; dimer of dimers. Mg(2+) serves as cofactor. Requires K(+) as cofactor.

The protein resides in the cytoplasm. The catalysed reaction is L-methionine + ATP + H2O = S-adenosyl-L-methionine + phosphate + diphosphate. The protein operates within amino-acid biosynthesis; S-adenosyl-L-methionine biosynthesis; S-adenosyl-L-methionine from L-methionine: step 1/1. Its function is as follows. Catalyzes the formation of S-adenosylmethionine (AdoMet) from methionine and ATP. The overall synthetic reaction is composed of two sequential steps, AdoMet formation and the subsequent tripolyphosphate hydrolysis which occurs prior to release of AdoMet from the enzyme. The chain is S-adenosylmethionine synthase from Nitrosomonas eutropha (strain DSM 101675 / C91 / Nm57).